The sequence spans 317 residues: Melanocyte-stimulating hormone receptor (317 aa).

Topologically, residues 1–37 (MPMQEPQRRLLDPFNSTRTGTPHLKLSANQTGPWCLH) are extracellular. N-linked (GlcNAc...) asparagine glycans are attached at residues Asn15 and Asn29. Residues 38–63 (VSIPDGLFLSLGLVSLVENVLVVISI) form a helical membrane-spanning segment. Topologically, residues 64-72 (AKNRNLHSP) are cytoplasmic. Residues 73–93 (MYYFICCLALSDLLVSVSIVL) traverse the membrane as a helical segment. Topologically, residues 94-118 (ETTLILVLEAGALATRVTVVQQLDN) are extracellular. Residues 119–140 (VIDVLICGSMVSSLCFLGAIAV) form a helical membrane-spanning segment. Topologically, residues 141–163 (DRYISIFYALRYHSIVTLPRARW) are cytoplasmic. Residues 164-183 (AIVAIWVASISSSTLFVAYY) traverse the membrane as a helical segment. Over 184-191 (NHTAVLLC) the chain is Extracellular. A helical transmembrane segment spans residues 192–211 (LVTFFLATLALMAVLYVHML). Residues 212-240 (ARAHQHAQAIAQLHKRQHLVHQGFRLKGA) lie on the Cytoplasmic side of the membrane. Residues 241–266 (ATLTILLGIFFLCWGPFFLYLTLIVL) form a helical membrane-spanning segment. The Extracellular portion of the chain corresponds to 267–279 (CPKHPTCSCFFKN). Residues 280–300 (LNLFLALIIFNSIVDPLIYAF) traverse the membrane as a helical segment. At 301–317 (RSQELRMTLKEVLLCSW) the chain is on the cytoplasmic side. Cys315 is lipidated: S-palmitoyl cysteine.

Belongs to the G-protein coupled receptor 1 family. Interacts with MGRN1, but does not undergo MGRN1-mediated ubiquitination; this interaction competes with GNAS-binding and thus inhibits agonist-induced cAMP production. Interacts with OPN3; the interaction results in a decrease in MC1R-mediated cAMP signaling and ultimately a decrease in melanin production in melanocytes.

The protein localises to the cell membrane. Receptor for MSH (alpha, beta and gamma) and ACTH. The activity of this receptor is mediated by G proteins which activate adenylate cyclase. Mediates melanogenesis, the production of eumelanin (black/brown) and phaeomelanin (red/yellow), via regulation of cAMP signaling in melanocytes. This Chaetodipus baileyi (Bailey's pocket mouse) protein is Melanocyte-stimulating hormone receptor (MC1R).